The sequence spans 338 residues: Ketol-acid reductoisomerase (NADP(+)) (338 aa).

One can recognise a KARI N-terminal Rossmann domain in the interval 1-181 (MKVFYDKDCD…GGGRAGIIET (181 aa)). NADP(+) contacts are provided by residues 24–27 (YGSQ), Arg-47, and Ser-52. The active site involves His-107. Residue Gly-133 participates in NADP(+) binding. Positions 182-327 (NFREETETDL…AKLRAMMPWI (146 aa)) constitute a KARI C-terminal knotted domain. Positions 190, 194, 226, and 230 each coordinate Mg(2+). Ser-251 serves as a coordination point for substrate.

This sequence belongs to the ketol-acid reductoisomerase family. The cofactor is Mg(2+).

It catalyses the reaction (2R)-2,3-dihydroxy-3-methylbutanoate + NADP(+) = (2S)-2-acetolactate + NADPH + H(+). The enzyme catalyses (2R,3R)-2,3-dihydroxy-3-methylpentanoate + NADP(+) = (S)-2-ethyl-2-hydroxy-3-oxobutanoate + NADPH + H(+). The protein operates within amino-acid biosynthesis; L-isoleucine biosynthesis; L-isoleucine from 2-oxobutanoate: step 2/4. It participates in amino-acid biosynthesis; L-valine biosynthesis; L-valine from pyruvate: step 2/4. Its function is as follows. Involved in the biosynthesis of branched-chain amino acids (BCAA). Catalyzes an alkyl-migration followed by a ketol-acid reduction of (S)-2-acetolactate (S2AL) to yield (R)-2,3-dihydroxy-isovalerate. In the isomerase reaction, S2AL is rearranged via a Mg-dependent methyl migration to produce 3-hydroxy-3-methyl-2-ketobutyrate (HMKB). In the reductase reaction, this 2-ketoacid undergoes a metal-dependent reduction by NADPH to yield (R)-2,3-dihydroxy-isovalerate. In Janthinobacterium sp. (strain Marseille) (Minibacterium massiliensis), this protein is Ketol-acid reductoisomerase (NADP(+)).